Here is a 315-residue protein sequence, read N- to C-terminus: Eukaryotic translation initiation factor 2 subunit 1 (315 aa).

Positions 17–88 (EDVVMVNVRS…EKGYIDLSKR (72 aa)) constitute an S1 motif domain. Residue Ser-49 is modified to Phosphoserine; by HRI. Residue Ser-52 is modified to Phosphoserine. Residue Lys-141 is modified to N6-acetyllysine. Ser-158 carries the phosphoserine modification. Phosphothreonine is present on residues Thr-279 and Thr-281. The segment at 292 to 315 (RLERENAEVDGDDDAEEMEAKAED) is disordered. Residues 299-308 (EVDGDDDAEE) show a composition bias toward acidic residues.

It belongs to the eIF-2-alpha family. Eukaryotic translation initiation factor 2 eIF2 is a heterotrimeric complex composed of an alpha (EIF2S1), a beta (EIF2S2) and a gamma (EIF2S3) chain. eIF2 is member of the 43S pre-initiation complex (43S PIC). eIF2 forms a complex with at least CELF1/CUGBP1, CALR, CALR3, EIF2S1, EIF2S2, HSP90B1 and HSPA5. Interaction with METAP2 protects EIF2S1 from inhibitory phosphorylation. Interacts with ABCF1. Associates with ribosomes. Interacts with DDX3X in an RNA-independent manner. Phosphorylation at Ser-49 and Ser-52 stabilizes the eIF-2/GDP/eIF2B complex and prevents GDP/GTP exchange reaction, thus impairing the recycling of eIF-2 between successive rounds of initiation and leading to global inhibition of translation, while concomitantly initiating the preferential translation of integrated stress response (ISR)-specific mRNAs. Substrate for at least 4 kinases: EIF2AK1/HRI, EIF2AK2/PKR, EIF2AK3/PERK and EIF2AK4/GCN2. Phosphorylation at Ser-52 by the EIF2AK3/PERK protein kinase occurs in response to the unfolded protein response. Phosphorylation on Ser-52 by the EIF2AK4/GCN2 protein kinase occurs in response to amino acid starvation and UV irradiation. Phosphorylation at Ser-52 by EIF2AK1/HRI in response to mitochondrial damage promotes relocalization to the mitochondrial surface.

It localises to the cytoplasm. The protein localises to the stress granule. Its subcellular location is the cytosol. The protein resides in the mitochondrion. Its activity is regulated as follows. Activity is regulated by phosphorylation at Ser-49 and Ser-52, which stabilizes the eIF2/GDP/eIF2B complex and prevents the eIF2B-mediated exchange of GDP for GTP, thereby preventing the formation of the 43S pre-initiation complex (43S PIC). This results in the global attenuation of 5' cap-dependent protein synthesis and concomitant translation of ISR-specific mRNAs that contain a short upstream open reading frame (uORF) in their 5' UTR, such as ATF4, ATF5, DDIT3/CHOP and PPP1R15A/GADD34. Functionally, member of the eIF2 complex that functions in the early steps of protein synthesis by forming a ternary complex with GTP and initiator tRNA. This complex binds to a 40S ribosomal subunit, followed by mRNA binding to form a 43S pre-initiation complex. Junction of the 60S ribosomal subunit to form the 80S initiation complex is preceded by hydrolysis of the GTP bound to eIF2 and release of an eIF2-GDP binary complex. In order for eIF2 to recycle and catalyze another round of initiation, the GDP bound to eIF2 must exchange with GTP by way of a reaction catalyzed by eIF2B. EIF2S1/eIF2-alpha is a key component of the integrated stress response (ISR), required for adaptation to various stress: phosphorylation by metabolic-stress sensing protein kinases (EIF2AK1/HRI, EIF2AK2/PKR, EIF2AK3/PERK and EIF2AK4/GCN2) in response to stress converts EIF2S1/eIF2-alpha in a global protein synthesis inhibitor, leading to a attenuation of cap-dependent translation, while concomitantly initiating the preferential translation of ISR-specific mRNAs, such as the transcriptional activators ATF4 and QRICH1, and hence allowing ATF4- and QRICH1-mediated reprogramming. EIF2S1/eIF2-alpha also acts as an activator of mitophagy in response to mitochondrial damage: phosphorylation by EIF2AK1/HRI promotes relocalization to the mitochondrial surface, thereby triggering PRKN-independent mitophagy. In Sus scrofa (Pig), this protein is Eukaryotic translation initiation factor 2 subunit 1 (EIF2S1).